Here is a 90-residue protein sequence, read N- to C-terminus: DNA-binding protein HU-beta (90 aa).

This sequence belongs to the bacterial histone-like protein family. In terms of assembly, heterodimer of an alpha and a beta chain.

In terms of biological role, histone-like DNA-binding protein which is capable of wrapping DNA to stabilize it, and thus to prevent its denaturation under extreme environmental conditions. This is DNA-binding protein HU-beta (hupB) from Pseudomonas aeruginosa (strain ATCC 15692 / DSM 22644 / CIP 104116 / JCM 14847 / LMG 12228 / 1C / PRS 101 / PAO1).